A 510-amino-acid chain; its full sequence is Chromosomal replication initiator protein DnaA (510 aa).

The domain I, interacts with DnaA modulators stretch occupies residues 1-74 (MHTDLWERGC…EATLSELAGK (74 aa)). The interval 74–173 (KPVRLELSLL…PTLSPAVSRG (100 aa)) is domain II. Positions 125–168 (ARHDPQSVVPTPGGSANGRAAPRVGEPGGPVGTSTLPVAPTLSP) are disordered. Residues 174 to 390 (RLNPALTFDT…GALRKVLAYS (217 aa)) form a domain III, AAA+ region region. 4 residues coordinate ATP: glycine 218, glycine 220, lysine 221, and threonine 222. Positions 391–510 (RFSHKEISIN…LHVLEQTLKG (120 aa)) are domain IV, binds dsDNA.

The protein belongs to the DnaA family. In terms of assembly, oligomerizes as a right-handed, spiral filament on DNA at oriC.

The protein localises to the cytoplasm. Functionally, plays an essential role in the initiation and regulation of chromosomal replication. ATP-DnaA binds to the origin of replication (oriC) to initiate formation of the DNA replication initiation complex once per cell cycle. Binds the DnaA box (a 9 base pair repeat at the origin) and separates the double-stranded (ds)DNA. Forms a right-handed helical filament on oriC DNA; dsDNA binds to the exterior of the filament while single-stranded (ss)DNA is stabiized in the filament's interior. The ATP-DnaA-oriC complex binds and stabilizes one strand of the AT-rich DNA unwinding element (DUE), permitting loading of DNA polymerase. After initiation quickly degrades to an ADP-DnaA complex that is not apt for DNA replication. Binds acidic phospholipids. The chain is Chromosomal replication initiator protein DnaA from Leptothrix cholodnii (strain ATCC 51168 / LMG 8142 / SP-6) (Leptothrix discophora (strain SP-6)).